Here is a 152-residue protein sequence, read N- to C-terminus: MKLILTADVDHLGAVGDTVEVKDGYGRNFLLPRGLAIVASRGAQKQADDIRRARETKAVRDLDHANELKTAIEALGPVTLPVKTAGDSGKLFGSVTAGDVVAAIKKAGGPNLDKRIVRLPKAHIKALGTHPVAVHLHPEVDVEVALEVVPQS.

This sequence belongs to the bacterial ribosomal protein bL9 family.

Binds to the 23S rRNA. This chain is Large ribosomal subunit protein bL9, found in Mycobacterium avium (strain 104).